Reading from the N-terminus, the 343-residue chain is CRISPR-associated endonuclease Cas1 1 (343 aa).

Glu-166, His-234, and Glu-249 together coordinate Mn(2+).

This sequence belongs to the CRISPR-associated endonuclease Cas1 family. As to quaternary structure, homodimer, forms a heterotetramer with a Cas2 homodimer. It depends on Mg(2+) as a cofactor. Mn(2+) is required as a cofactor.

Its function is as follows. CRISPR (clustered regularly interspaced short palindromic repeat), is an adaptive immune system that provides protection against mobile genetic elements (viruses, transposable elements and conjugative plasmids). CRISPR clusters contain spacers, sequences complementary to antecedent mobile elements, and target invading nucleic acids. CRISPR clusters are transcribed and processed into CRISPR RNA (crRNA). Acts as a dsDNA endonuclease. Involved in the integration of spacer DNA into the CRISPR cassette. This Moorella thermoacetica (strain ATCC 39073 / JCM 9320) protein is CRISPR-associated endonuclease Cas1 1.